The chain runs to 207 residues: Small ribosomal subunit protein uS4 (207 aa).

One can recognise an S4 RNA-binding domain in the interval 97-165 (SRLDNLVFRM…VKLALESKAV (69 aa)).

It belongs to the universal ribosomal protein uS4 family. As to quaternary structure, part of the 30S ribosomal subunit. Contacts protein S5. The interaction surface between S4 and S5 is involved in control of translational fidelity.

In terms of biological role, one of the primary rRNA binding proteins, it binds directly to 16S rRNA where it nucleates assembly of the body of the 30S subunit. Its function is as follows. With S5 and S12 plays an important role in translational accuracy. In Mycoplasmoides gallisepticum (strain R(low / passage 15 / clone 2)) (Mycoplasma gallisepticum), this protein is Small ribosomal subunit protein uS4.